A 177-amino-acid chain; its full sequence is Centromere protein R (177 aa).

A Glycyl lysine isopeptide (Lys-Gly) (interchain with G-Cter in SUMO2) cross-link involves residue lysine 8. The LXXLL motif motif lies at 9–13; the sequence is LDGLL. Position 17 is a phosphoserine (serine 17). The interval 20-50 is DD1; it reads PSKITRKKSVITYSPTTGTCQMSLFASPTSS. Lysine 22 is covalently cross-linked (Glycyl lysine isopeptide (Lys-Gly) (interchain with G-Cter in SUMO2)). Serine 28 is subject to Phosphoserine. Positions 41-50 are enriched in polar residues; sequence MSLFASPTSS. Residues 41 to 81 form a disordered region; sequence MSLFASPTSSEEQKHRNGLSNEKRKKLNHPSLTESKESTTK. Residues 63-66 carry the Nuclear localization signal motif; sequence KRKK. Serine 71 is subject to Phosphoserine. Positions 83–113 form a coiled coil; that stretch reads NDEFMMLLSKVEKLSEEIMEIMQNLSSIQAL. The short motif at 172-176 is the LXXIL motif element; it reads LKAIL.

As to quaternary structure, homodimer; mediated by the coiled coil domain. Isoform 3, but not other isoforms, interacts with the cytoplasmic tail of integrin ITGB3. The relevance of the interaction with ITGB3 is however uncertain, since isoform 3 is mainly nuclear. Interacts with CCNA2 and MTA1. Interacts with NFKB1 NF-kappa-B subunit. Component of the CENPA-CAD complex, composed of CENPI, CENPK, CENPL, CENPO, CENPP, CENPQ, CENPR and CENPS. The CENPA-CAD complex interacts with the CENPA-NAC complex, at least composed of CENPA, CENPC, CENPH, CENPM, CENPN, CENPT and CENPU. Interacts with TASOR. As to expression, widely expressed. Expressed in spleen, thymus, prostate, ovary, small intestine and white blood cells. Highly expressed in testis and colon. Isoform 4 is expressed in platelets, lymphocytes and granulocytes.

Its subcellular location is the nucleus. It is found in the chromosome. The protein resides in the centromere. The protein localises to the kinetochore. It localises to the cytoplasm. Functionally, transcription coregulator that can have both coactivator and corepressor functions. Isoform 1, but not other isoforms, is involved in the coactivation of nuclear receptors for retinoid X (RXRs) and thyroid hormone (TRs) in a ligand-dependent fashion. In contrast, it does not coactivate nuclear receptors for retinoic acid, vitamin D, progesterone receptor, nor glucocorticoid. Acts as a coactivator for estrogen receptor alpha. Acts as a transcriptional corepressor via its interaction with the NFKB1 NF-kappa-B subunit, possibly by interfering with the transactivation domain of NFKB1. Induces apoptosis in breast cancer cells, but not in other cancer cells, via a caspase-2 mediated pathway that involves mitochondrial membrane permeabilization but does not require other caspases. May also act as an inhibitor of cyclin A-associated kinase. Also acts a component of the CENPA-CAD (nucleosome distal) complex, a complex recruited to centromeres which is involved in assembly of kinetochore proteins, mitotic progression and chromosome segregation. May be involved in incorporation of newly synthesized CENPA into centromeres via its interaction with the CENPA-NAC complex. This is Centromere protein R (ITGB3BP) from Homo sapiens (Human).